Consider the following 382-residue polypeptide: Tuliposide A-converting enzyme 2, chloroplastic (382 aa).

Residues 1–74 (MSVASFFSSL…PSPSLSPTPT (74 aa)) constitute a chloroplast transit peptide. Ser-232 (acyl-ester intermediate) is an active-site residue. Residues Asp-324 and His-356 each act as charge relay system in the active site.

It belongs to the AB hydrolase superfamily. In terms of assembly, homodimer. As to expression, expressed in roots, stems, leaves, petals, stamens and pistils, but not in bulb scales.

It is found in the plastid. Its subcellular location is the chloroplast. It catalyses the reaction 6-tuliposide A = tulipalin A + D-glucose. Its activity is regulated as follows. Inhibited by NaF, AgNO(3), HgCl(2), CuSO(4) and phenylmethylsulfonyl fluoride (PMSF). Its function is as follows. Lactone-forming carboxylesterases, specifically catalyzing intramolecular transesterification, but not hydrolysis. Involved in the biosynthesis of tulipalins, defensive chemicals that show antimicrobial activities against a broad range of strains of bacteria and fungi. Substrates are 6-tuliposide A &gt; 6-tuliposide B. This chain is Tuliposide A-converting enzyme 2, chloroplastic (TCEA2), found in Tulipa gesneriana (Garden tulip).